Reading from the N-terminus, the 221-residue chain is Protein Thf1 (221 aa).

The stretch at 174–213 (TKERVEKDVNLYKSSLDKIEKALELIEMNIKDEKRRNKER) forms a coiled coil.

It belongs to the THF1 family.

May be involved in photosynthetic membrane biogenesis. This chain is Protein Thf1, found in Prochlorococcus marinus (strain MIT 9211).